The following is a 175-amino-acid chain: MLPSLGLPRLSWMLLSCLMLLSQIQGENSQKELPSARISCPSGSMAYRSHCYALFKTPKTWMDADIACQKRPSGHLVSVLSGAEESFVASLVRNNLNTQSDIWIGLHDPTEGSEANAGGWEWISNDVLNYVAWETDPAAISSPGYCGSLSRSSGYLKWRDHNCNLNLPYVCKFTD.

The first 26 residues, 1–26 (MLPSLGLPRLSWMLLSCLMLLSQIQG), serve as a signal peptide directing secretion. A propeptide spanning residues 27–37 (ENSQKELPSAR) is cleaved from the precursor. The C-type lectin domain maps to 38–173 (ISCPSGSMAY…NLNLPYVCKF (136 aa)). 3 cysteine pairs are disulfide-bonded: Cys-40-Cys-51, Cys-68-Cys-171, and Cys-146-Cys-163.

As to quaternary structure, cleaved to give an A chain and a B chain joined by a disulfide bond. As to expression, in pancreatic acinar cells.

It is found in the secreted. In terms of biological role, might act as an inhibitor of spontaneous calcium carbonate precipitation. The protein is Lithostathine (PTP) of Bos taurus (Bovine).